Consider the following 217-residue polypeptide: tRNA (guanine-N(7)-)-methyltransferase (217 aa).

Residues Glu44, Glu69, Asp96, and Asp118 each coordinate S-adenosyl-L-methionine. Residue Asp118 is part of the active site. Substrate contacts are provided by residues Lys122, Asp154, and Thr191–Glu194.

The protein belongs to the class I-like SAM-binding methyltransferase superfamily. TrmB family.

It carries out the reaction guanosine(46) in tRNA + S-adenosyl-L-methionine = N(7)-methylguanosine(46) in tRNA + S-adenosyl-L-homocysteine. Its pathway is tRNA modification; N(7)-methylguanine-tRNA biosynthesis. Catalyzes the formation of N(7)-methylguanine at position 46 (m7G46) in tRNA. This Bacillus anthracis (strain CDC 684 / NRRL 3495) protein is tRNA (guanine-N(7)-)-methyltransferase.